A 209-amino-acid polypeptide reads, in one-letter code: Dual specificity protein phosphatase 22 (209 aa).

Residues 4–144 (GMNKILPSLF…LEDFGKHDVY (141 aa)) enclose the Tyrosine-protein phosphatase domain. The active-site Phosphocysteine intermediate is the cysteine 88. Positions 170-193 (DKHKQQEAAESQSATSSGRQWSSH) are disordered. Residues 177–193 (AAESQSATSSGRQWSSH) are compositionally biased toward low complexity.

It belongs to the protein-tyrosine phosphatase family. Non-receptor class dual specificity subfamily.

The protein localises to the cytoplasm. It is found in the nucleus. It carries out the reaction O-phospho-L-tyrosyl-[protein] + H2O = L-tyrosyl-[protein] + phosphate. The enzyme catalyses O-phospho-L-seryl-[protein] + H2O = L-seryl-[protein] + phosphate. The catalysed reaction is O-phospho-L-threonyl-[protein] + H2O = L-threonyl-[protein] + phosphate. Activates the Jnk signaling pathway. Dephosphorylates and deactivates p38 and stress-activated protein kinase/c-Jun N-terminal kinase (SAPK/JNK). This Xenopus tropicalis (Western clawed frog) protein is Dual specificity protein phosphatase 22 (dusp22).